Consider the following 474-residue polypeptide: MTRMTRHLALWMLLSLAILASQSAMAQKLPDFTSLVEEAAPAVVNISTSRTVETRNMPFGQFGGQELPEIFKHFFGERFGDQMPMPPGAQGHSEERRSLGSGFIISEDGYIMTNAHVVEGADEILVSLNDGRELKAELVGADTKTDVAVLKVDADNLPTLTLGDSEDLKVGQWVAAIGSPFGLDHSVTSGIISAINRTLPRDVYVPFIQTDVAINPGNSGGPLFNLDGEVIGINSQIFTRSGGYMGLSFAIPIDVAMDVADQLRNDGSVSRGWLGVMIQPVSRELADSFGMDKPQGALIADLDPDGPAARDGLKAGDVVLEVDGQTVDSSSALPRLIGRVSPGNDVELKVLRNGEHRNVTVTVGDWPDSQKGAGGSAGDTAPARLGLAVRPLEEGQHDQAIDNGVRVVEVDPTGVAAKAGIRAGDILVSIGEHAVESPEQLSELIGELPEDRAVPVRLYRSGHSYYVALRLAQK.

Positions 1–26 are cleaved as a signal peptide; the sequence is MTRMTRHLALWMLLSLAILASQSAMA. Residues His116, Asp146, and Ser219 each act as charge relay system in the active site. Residues 217–219 and 274–278 contribute to the substrate site; these read GNS and LGVMI. PDZ domains follow at residues 263-354 and 360-462; these read LRND…LRNG and TVTV…YRSG.

The protein belongs to the peptidase S1C family.

The protein localises to the periplasm. It carries out the reaction Acts on substrates that are at least partially unfolded. The cleavage site P1 residue is normally between a pair of hydrophobic residues, such as Val-|-Val.. In terms of biological role, might be efficient in the degradation of transiently denatured and unfolded proteins which accumulate in the periplasm following stress conditions. In Halomonas elongata (strain ATCC 33173 / DSM 2581 / NBRC 15536 / NCIMB 2198 / 1H9), this protein is Probable periplasmic serine endoprotease DegP-like (mucD).